A 459-amino-acid chain; its full sequence is UDP-N-acetylmuramate--L-alanine ligase (459 aa).

118–124 is a binding site for ATP; the sequence is GTHGKTT.

It belongs to the MurCDEF family.

The protein resides in the cytoplasm. It catalyses the reaction UDP-N-acetyl-alpha-D-muramate + L-alanine + ATP = UDP-N-acetyl-alpha-D-muramoyl-L-alanine + ADP + phosphate + H(+). It functions in the pathway cell wall biogenesis; peptidoglycan biosynthesis. Cell wall formation. This Clostridium beijerinckii (strain ATCC 51743 / NCIMB 8052) (Clostridium acetobutylicum) protein is UDP-N-acetylmuramate--L-alanine ligase.